Here is a 515-residue protein sequence, read N- to C-terminus: Iroquois-class homeodomain protein IRX-4 (515 aa).

Positions 144 to 205 form a DNA-binding region, homeobox; TALE-type; sequence GTRRKNATRE…NARRRLKKEN (62 aa). Disordered stretches follow at residues 205–258, 278–307, and 398–425; these read NKMT…ELEL, TPFQ…STTL, and GPTG…RHQD. Residues 214-223 are compositionally biased toward basic and acidic residues; that stretch reads KCADEKRPYG. The segment covering 224–236 has biased composition (acidic residues); the sequence is EGEEEEAGEEESR. The span at 237–257 shows a compositional bias: basic and acidic residues; that stretch reads EEPLKSAKSEGHAGKDDKELE. Over residues 399–419 the composition is skewed to low complexity; sequence PTGVSATTPASSPAVTAPSGA.

The protein belongs to the TALE/IRO homeobox family. In terms of assembly, interacts with the vitamin D receptor VDR but doesn't affect its transactivation activity. As to expression, expressed in the developing central nervous system, skin, and vibrissae, but predominantly expressed in the cardiac ventricles of the developing heart. Not expressed in the developing metanephric kidney or adult kidney.

The protein localises to the nucleus. Functionally, likely to be an important mediator of ventricular differentiation during cardiac development. The chain is Iroquois-class homeodomain protein IRX-4 (Irx4) from Mus musculus (Mouse).